We begin with the raw amino-acid sequence, 362 residues long: tRNA/tmRNA (uracil-C(5))-methyltransferase (362 aa).

S-adenosyl-L-methionine-binding residues include Q186, Y214, N219, E235, and D295. C320 acts as the Nucleophile in catalysis. The Proton acceptor role is filled by E354.

Belongs to the class I-like SAM-binding methyltransferase superfamily. RNA M5U methyltransferase family. TrmA subfamily.

The enzyme catalyses uridine(54) in tRNA + S-adenosyl-L-methionine = 5-methyluridine(54) in tRNA + S-adenosyl-L-homocysteine + H(+). It catalyses the reaction uridine(341) in tmRNA + S-adenosyl-L-methionine = 5-methyluridine(341) in tmRNA + S-adenosyl-L-homocysteine + H(+). Dual-specificity methyltransferase that catalyzes the formation of 5-methyluridine at position 54 (m5U54) in all tRNAs, and that of position 341 (m5U341) in tmRNA (transfer-mRNA). The protein is tRNA/tmRNA (uracil-C(5))-methyltransferase of Dechloromonas aromatica (strain RCB).